We begin with the raw amino-acid sequence, 594 residues long: UvrABC system protein C (594 aa).

A GIY-YIG domain is found at 14-91 (DSPGCYLHKD…IQENMPKYNI (78 aa)). In terms of domain architecture, UVR spans 196 to 231 (DKIIDDLRSKMLEASHNQEFERAAEYRDLISGIATM).

The protein belongs to the UvrC family. As to quaternary structure, interacts with UvrB in an incision complex.

Its subcellular location is the cytoplasm. Functionally, the UvrABC repair system catalyzes the recognition and processing of DNA lesions. UvrC both incises the 5' and 3' sides of the lesion. The N-terminal half is responsible for the 3' incision and the C-terminal half is responsible for the 5' incision. The sequence is that of UvrABC system protein C from Streptococcus equi subsp. equi (strain 4047).